The sequence spans 291 residues: Transmembrane O-methyltransferase (291 aa).

Residues 31–51 form a helical membrane-spanning segment; the sequence is VGTMSPAIALAFLPLVVTLLV. S-adenosyl-L-methionine-binding positions include E137, 139 to 140, S145, E163, and S193; that span reads GT.

The protein belongs to the class I-like SAM-binding methyltransferase superfamily. Cation-dependent O-methyltransferase family. Interacts with LHFPL5, PCDH15, TMC1, TMC2 and TMIE. Interacts directly with TMC1. The interaction of TOMT with TMC1 and TMC2 is required for the transportation of TMC1/2 into the stereocilia of hair cells.

It localises to the membrane. Its subcellular location is the cytoplasm. The protein resides in the endoplasmic reticulum. The enzyme catalyses a catechol + S-adenosyl-L-methionine = a guaiacol + S-adenosyl-L-homocysteine + H(+). Its function is as follows. Catalyzes the O-methylation, and thereby the inactivation, of catecholamine neurotransmitters and catechol hormones. Required for auditory function. Component of the cochlear hair cell's mechanotransduction (MET) machinery. Involved in the assembly of the asymmetric tip-link MET complex. Required for transportation of TMC1 and TMC2 proteins into the mechanically sensitive stereocilia of the hair cells. The function in MET is independent of the enzymatic activity. This chain is Transmembrane O-methyltransferase, found in Homo sapiens (Human).